The following is a 141-amino-acid chain: GMSGSCTVKTCWMRLPSFRSVGDALKDRFDGASRVMVSNTDLEAPTQRNDAAPHRAPRRERYKLKLQPHNPDHKSPGSKDLVYLEPSPGFCEKNPRLGIPGTHGRACNDTSIGVDGCDLMCCGRGYRTETMFVVERCNCTF.

A lipid anchor (O-palmitoleoyl serine; by PORCN) is attached at S3. Residues T40–N49 show a composition bias toward polar residues. Residues T40 to R61 are disordered. Residues C107 and C122 are joined by a disulfide bond. N-linked (GlcNAc...) asparagine glycosylation is found at N108 and N138.

This sequence belongs to the Wnt family. Post-translationally, palmitoleoylated by porcupine. The lipid group functions as a sorting signal, targeting the ligand to polarized vesicles that transport wg to unique sites at the cell surface. Depalmitoleoylated by notum, leading to inhibit Wnt signaling pathway.

It localises to the secreted. The protein localises to the extracellular space. It is found in the extracellular matrix. Its function is as follows. Segment polarity protein. Binds to the frizzled seven-transmembrane receptors. This protein is probably a growth factor. The sequence is that of Protein wingless (WG) from Manduca sexta (Tobacco hawkmoth).